The primary structure comprises 97 residues: YcgL domain-containing protein CPS_3517 (97 aa).

Residues 1-85 (MLCAIYKSAR…PQEDLLKEHK (85 aa)) form the YcgL domain.

The protein is YcgL domain-containing protein CPS_3517 of Colwellia psychrerythraea (strain 34H / ATCC BAA-681) (Vibrio psychroerythus).